The following is a 142-amino-acid chain: Ribosome-binding factor A (142 aa).

Residues 123–142 are disordered; that stretch reads VQRDLDSAPEDDEPETGTGH. Residues 129-142 are compositionally biased toward acidic residues; sequence SAPEDDEPETGTGH.

It belongs to the RbfA family. In terms of assembly, monomer. Binds 30S ribosomal subunits, but not 50S ribosomal subunits or 70S ribosomes.

It localises to the cytoplasm. Its function is as follows. One of several proteins that assist in the late maturation steps of the functional core of the 30S ribosomal subunit. Associates with free 30S ribosomal subunits (but not with 30S subunits that are part of 70S ribosomes or polysomes). Required for efficient processing of 16S rRNA. May interact with the 5'-terminal helix region of 16S rRNA. This chain is Ribosome-binding factor A, found in Methylobacterium radiotolerans (strain ATCC 27329 / DSM 1819 / JCM 2831 / NBRC 15690 / NCIMB 10815 / 0-1).